Consider the following 215-residue polypeptide: ATP-dependent dethiobiotin synthetase BioD (215 aa).

13-18 (DIGKTV) provides a ligand contact to ATP. A Mg(2+)-binding site is contributed by Thr17. The active site involves Lys38. Thr42 provides a ligand contact to substrate. Residues Asp50, 115–118 (EGAG), and 175–176 (NH) contribute to the ATP site. Mg(2+) contacts are provided by Asp50 and Glu115.

It belongs to the dethiobiotin synthetase family. Homodimer. The cofactor is Mg(2+).

Its subcellular location is the cytoplasm. It carries out the reaction (7R,8S)-7,8-diammoniononanoate + CO2 + ATP = (4R,5S)-dethiobiotin + ADP + phosphate + 3 H(+). It participates in cofactor biosynthesis; biotin biosynthesis; biotin from 7,8-diaminononanoate: step 1/2. In terms of biological role, catalyzes a mechanistically unusual reaction, the ATP-dependent insertion of CO2 between the N7 and N8 nitrogen atoms of 7,8-diaminopelargonic acid (DAPA, also called 7,8-diammoniononanoate) to form a ureido ring. This Neisseria meningitidis serogroup C / serotype 2a (strain ATCC 700532 / DSM 15464 / FAM18) protein is ATP-dependent dethiobiotin synthetase BioD.